A 557-amino-acid polypeptide reads, in one-letter code: 2,3-bisphosphoglycerate-independent phosphoglycerate mutase 1 (557 aa).

Mn(2+) is bound by residues aspartate 27 and serine 80. Catalysis depends on serine 80, which acts as the Phosphoserine intermediate. Residues histidine 139, 169-170 (RD), arginine 205, arginine 212, 285-288 (RADR), and lysine 360 each bind substrate. Mn(2+)-binding residues include aspartate 429, histidine 433, aspartate 470, histidine 471, and histidine 500.

Belongs to the BPG-independent phosphoglycerate mutase family. Monomer. Mn(2+) is required as a cofactor.

Its subcellular location is the cytoplasm. The enzyme catalyses (2R)-2-phosphoglycerate = (2R)-3-phosphoglycerate. The protein operates within carbohydrate degradation; glycolysis; pyruvate from D-glyceraldehyde 3-phosphate: step 3/5. Its function is as follows. Catalyzes the interconversion of 2-phosphoglycerate (2-PGA) and 3-phosphoglycerate (3-PGA). Required for guard cell function (e.g. blue light-, abscisic acid- (ABA), and low CO(2)-regulated stomatal movements) and fertility (e.g. pollen grains production). The polypeptide is 2,3-bisphosphoglycerate-independent phosphoglycerate mutase 1 (PGM1) (Arabidopsis thaliana (Mouse-ear cress)).